A 383-amino-acid chain; its full sequence is D-alanine--D-alanine ligase (383 aa).

Residues 169–373 (KALLRAAGLP…YPQLVDRLVR (205 aa)) form the ATP-grasp domain. 196–251 (QERLGLPVFVKPARGGSSIGISRVEAWADLDTAIKAARASDPKVLVESAIVGREIE) is a binding site for ATP. Residues aspartate 327, glutamate 340, and asparagine 342 each contribute to the Mg(2+) site.

The protein belongs to the D-alanine--D-alanine ligase family. Requires Mg(2+) as cofactor. Mn(2+) serves as cofactor.

It localises to the cytoplasm. It catalyses the reaction 2 D-alanine + ATP = D-alanyl-D-alanine + ADP + phosphate + H(+). It functions in the pathway cell wall biogenesis; peptidoglycan biosynthesis. In terms of biological role, cell wall formation. This Frankia casuarinae (strain DSM 45818 / CECT 9043 / HFP020203 / CcI3) protein is D-alanine--D-alanine ligase.